Reading from the N-terminus, the 434-residue chain is F-box/kelch-repeat protein At1g55270 (434 aa).

Residues 76–122 enclose the F-box domain; that stretch reads PPLLPGLPDDLAVACLIRVPRAEHRKLRLVCKRWYRLASGNFFYSQR. Kelch repeat units follow at residues 129–178, 180–227, 229–276, 278–321, and 325–371; these read EEWV…VLSG, HLYL…VINN, LYVA…VYDK, WFLK…SLNG, and GLDC…LHNK.

This is F-box/kelch-repeat protein At1g55270 from Arabidopsis thaliana (Mouse-ear cress).